The chain runs to 511 residues: Maturase K (511 aa).

The protein belongs to the intron maturase 2 family. MatK subfamily.

The protein resides in the plastid. Functionally, usually encoded in the trnK tRNA gene intron. Probably assists in splicing its own and other chloroplast group II introns. The sequence is that of Maturase K from Lathraea clandestina (Purple toothwort).